A 1121-amino-acid chain; its full sequence is PR domain zinc finger protein 10 (1121 aa).

2 disordered regions span residues 1–24 and 92–125; these read MEAK…NTPQ and TEAS…MDDW. The segment covering 106–124 has biased composition (acidic residues); it reads VDSEDEEEDNDSEDSEMDD. The SET domain occupies 173–290; sequence LPLVLYIDRF…PKQELKVWYA (118 aa). The interval 192 to 295 is N-terminal PR domain; essential for transcriptional activation; the sequence is IPKRTQFGPL…KVWYAASYAE (104 aa). The segment at 319–341 adopts a C2H2-type 1 zinc-finger fold; it reads WPCYECNRRFMSSEQLQQHLNMH. Disordered stretches follow at residues 350 to 387 and 419 to 473; these read RPKS…SADK and ESME…PHLT. Residues 351 to 374 are compositionally biased toward basic residues; the sequence is PKSRGRGRGRKRFGGARRPGRRTK. C2H2-type zinc fingers lie at residues 500–522, 529–551, 557–579, 585–608, 613–635, 641–664, 696–719, 741–764, and 803–826; these read FKCP…MRFH, HVCH…LVLH, YSCL…VGIH, FLCP…RSFH, FQCS…MLRH, FLCS…QRMH, FKCR…SKRH, YYCQ…LKNH, and VCCP…RKKH. The interval 871 to 1101 is C-terminal glutamine-rich region; essential for transcriptional activation; the sequence is QAMTELSQTL…PAGGQQATTQ (231 aa). Residues 1077–1097 form a disordered region; the sequence is VPSTATQGHPDPLEQPAGGQQ.

The protein belongs to the class V-like SAM-binding methyltransferase superfamily.

The protein resides in the nucleus. Functionally, transcriptional activator, essential for early embryonic development and survival of embryonic stem cells (ESCs). Supports cell growth and survival during early development by transcriptionally activating the expression of the translation initiation factor EIF3B, to sustain global translation. Activates the transcription of FLNC. This Danio rerio (Zebrafish) protein is PR domain zinc finger protein 10 (prdm10).